Here is a 442-residue protein sequence, read N- to C-terminus: Histidinol dehydrogenase (442 aa).

3 residues coordinate NAD(+): Tyr138, Gln199, and Asn222. Substrate-binding residues include Ser245, Gln267, and His270. Zn(2+) contacts are provided by Gln267 and His270. Residues Glu335 and His336 each act as proton acceptor in the active site. 4 residues coordinate substrate: His336, Asp369, Glu423, and His428. Asp369 provides a ligand contact to Zn(2+). Zn(2+) is bound at residue His428.

It belongs to the histidinol dehydrogenase family. The cofactor is Zn(2+).

The enzyme catalyses L-histidinol + 2 NAD(+) + H2O = L-histidine + 2 NADH + 3 H(+). The protein operates within amino-acid biosynthesis; L-histidine biosynthesis; L-histidine from 5-phospho-alpha-D-ribose 1-diphosphate: step 9/9. Its function is as follows. Catalyzes the sequential NAD-dependent oxidations of L-histidinol to L-histidinaldehyde and then to L-histidine. This chain is Histidinol dehydrogenase, found in Ralstonia nicotianae (strain ATCC BAA-1114 / GMI1000) (Ralstonia solanacearum).